Consider the following 1489-residue polypeptide: MAEKKIAFRNRQDFSKIPATIQIPNLIEVQKRSYDRFLQMDLLPSERDDAGLQAVFQSVFPITDFRNVSQLEFVDYAIGNWECKCGHLKGLHHLRTTCKNCGATVVTDPFHPGDVLCHKCGTFNANTPDFCNKCGDPVGLQLKYDVAECEERGMTYSAPLKVTMRLTIFDKDPETNNRTIRDIKEQEVFFGDVPLMTQNGTFIINGTERVIVSQLHRSPGVFFETANNRTYFLGKIIPYRGSWVEFEYDQKNILYVRIDRKRKFLGTIFLRALGLRTDEDILRTFYTVDRIAVKDKKLYWTLEPGIERPTNLVGLKLSHAIKAKNGEEVAHSGRKVTASVLKEIQKHKISELEIELGDLEGAYVASDVIDTNTGEVLLEANQELTADKLSKMIDAGIGEVNVFFPERDDVGTVISATLRRDSVKTPQEALIEIYRKLRPGDPPTLDTATALFHGMFFDARKYDFSRVGRLKFNIKLFDRQDPTGLDKRTLDPDDFYHTIRYLLKLRRNLGAVDDIDHLGNRRVRAVGELLENQFRIGLVRMERAIKEKMSVYQEMSTAMPHDLVNAKPVMAAIREFFGSSQLSQFMDQTNPLSEITHKRRLSALGPGGLSRERAGFEVRDVHPTHYGRICPIETPEGPNIGLISSLSCYARINDYGFIESPYRRVKGGRVIDYVQVTHAGDSDYRVGDKMEKSEAQKANEELRGRKKRGIELEPYSFYLSAWEEDKWTIAQANAELDEKGKITSELVNARKAGNFVLISRDDIDYIDVSPKQLVSVAASLVPFLEHDDANRALMGANMQRQSVPLLRAEAPIVGTGMEGVTARDSGAVVLARRSGIIDSVDSERVIVRVEGEHHPMQLSREVGSDIYQLTKFKRSNQNTCINQKPIVKQGDHVKKGQVIADGPCTDHGELGLGRNVLVSFMPWRGYNFEDAILVSEKLVKEDYYTSVHIEEFEIEARDTKLGPEEITRDIPNVSESALRDLDESGVIRIGAPVKAGDILVGKVTPKGETQLTPEEKLLRAIFGEKAGDVRDASLTCPPGIEGVVVDVKIFSRKGQEKDERAKQIEGTQIAKLEKNLADEIRILTDERLKRLEGLLGAKVVQADLHDERTNKRLLTKDAVLDRETIERISTRNLKRIKYADKDPRVNEQIDEIEEMTSRQIDVLRKIVREKIEKLQKGDELPPGVIKLVKVYIAMKRKLSVGDKMAGRHGNKGVIARILPEEDMPYLEDGTPVEIVLNPLGVPSRMNVGQILETHLGWAGHELGKKIAEFMVENSEAGQVRKHLKQLFKDTAFVDHVTELDDEMLLKVAKGMQDGVFFGSAVFDGSTEAEIKSLLDQAGLPTSGKTFLYDGMTGDRFEQPVTVGYIYMLKLSHLVDDKIHARSIGPYSLITQQPLGGKAQFGGQRFGEMEVWALEAYGAAYILQELLTAKSDDVYGRTKIYEAIVKGEAAIEPGVPESFNVLIRELQSLCLDVELIKTKEKAAPAPVAAD.

This sequence belongs to the RNA polymerase beta chain family. As to quaternary structure, the RNAP catalytic core consists of 2 alpha, 1 beta, 1 beta' and 1 omega subunit. When a sigma factor is associated with the core the holoenzyme is formed, which can initiate transcription.

The enzyme catalyses RNA(n) + a ribonucleoside 5'-triphosphate = RNA(n+1) + diphosphate. Its function is as follows. DNA-dependent RNA polymerase catalyzes the transcription of DNA into RNA using the four ribonucleoside triphosphates as substrates. The polypeptide is DNA-directed RNA polymerase subunit beta (Koribacter versatilis (strain Ellin345)).